A 103-amino-acid polypeptide reads, in one-letter code: Small ribosomal subunit protein uS10 (103 aa).

Belongs to the universal ribosomal protein uS10 family. As to quaternary structure, part of the 30S ribosomal subunit.

In terms of biological role, involved in the binding of tRNA to the ribosomes. This Pseudoalteromonas translucida (strain TAC 125) protein is Small ribosomal subunit protein uS10.